The chain runs to 139 residues: D-ribose pyranase (139 aa).

Catalysis depends on His-20, which acts as the Proton donor. Residues Asp-28, His-106, and 128 to 130 (YAN) contribute to the substrate site.

Belongs to the RbsD / FucU family. RbsD subfamily. In terms of assembly, homodecamer.

It localises to the cytoplasm. The catalysed reaction is beta-D-ribopyranose = beta-D-ribofuranose. The protein operates within carbohydrate metabolism; D-ribose degradation; D-ribose 5-phosphate from beta-D-ribopyranose: step 1/2. Its function is as follows. Catalyzes the interconversion of beta-pyran and beta-furan forms of D-ribose. This is D-ribose pyranase from Actinobacillus succinogenes (strain ATCC 55618 / DSM 22257 / CCUG 43843 / 130Z).